Here is a 471-residue protein sequence, read N- to C-terminus: MGFLWTGSWILVLVLNSGPIQAFPKPEGSQDKSLHNRELSAERPLNEQIAEAEADKIKKTYPSESKPSESNFSSVDNLNLLKAITEKETVEKAKQSIRSSPFDNRLNVDDADSTKNRKLTDEYDSTKSGLDRKVQDDPDGLHQLDGTPLTAEDIVHKIATRIYEENDRGVFDKIVSKLLNLGLITESQAHTLEDEVAEALQKLISKEANNYEEAPEKPTSRTENQDGKIPEKVTPVAATQDGFTNRENDDTVSNTLTLSNGLERRTNPHRDDDFEELQYFPNFYALLTSIDSEKEAKEKETLITIMKTLIDFVKMMVKYGTISPEEGVSYLENLDETIALQTKNKLEKNTTDSKSKLFPAPPEKSHEETDSTKEEAAKMEKEYGSLKDSTKDDNSNLGGKTDEAKGKTEAYLEAIRKNIEWLKKHNKKGNKEDYDLSKMRDFINQQADAYVEKGILDKEEANAIKRIYSSL.

The first 22 residues, 1–22 (MGFLWTGSWILVLVLNSGPIQA), serve as a signal peptide directing secretion. Disordered stretches follow at residues 24 to 73 (PKPE…SNFS), 92 to 145 (KAKQ…HQLD), 208 to 231 (ANNY…KIPE), and 345 to 405 (KLEK…DEAK). Residues 28-45 (GSQDKSLHNRELSAERPL) are compositionally biased toward basic and acidic residues. The residue at position 40 (Ser40) is a Phosphoserine. An O-linked (Xyl...) (chondroitin sulfate) serine glycan is attached at Ser40. The span at 62–73 (PSESKPSESNFS) shows a compositional bias: low complexity. 4 stretches are compositionally biased toward basic and acidic residues: residues 106–142 (LNVD…DGLH), 214–231 (APEK…KIPE), 345–355 (KLEKNTTDSKS), and 363–405 (EKSH…DEAK). Residue Ser365 is modified to Phosphoserine.

As to quaternary structure, interacts with CHGA. Interacts with secretogranin II/SCG2. Interacts (via C-terminus) with CPE. Expression restricted to the brain and pituitary gland. Not detected in the adrenal gland.

The protein resides in the cytoplasmic vesicle. It localises to the secretory vesicle. The protein localises to the secretory vesicle membrane. It is found in the secreted. Functionally, member of the granin protein family that regulates the biogenesis of secretory granules. Acts as a sorting receptor for intragranular proteins including chromogranin A/CHGA. May also play a role in angiogenesis. Promotes endothelial proliferation, migration and tube formation through MEK/ERK signaling pathway. The protein is Secretogranin-3 (Scg3) of Rattus norvegicus (Rat).